A 105-amino-acid polypeptide reads, in one-letter code: Large ribosomal subunit protein uL18c (105 aa).

This sequence belongs to the universal ribosomal protein uL18 family. Part of the 50S ribosomal subunit; contacts the 5S rRNA.

It localises to the plastid. Its subcellular location is the chloroplast. Its function is as follows. Binds 5S rRNA, forms part of the central protuberance of the 50S subunit. This Gracilaria tenuistipitata var. liui (Red alga) protein is Large ribosomal subunit protein uL18c (rpl18).